The following is a 216-amino-acid chain: Splicing factor U2AF 23 kDa subunit (216 aa).

A C3H1-type 1 zinc finger spans residues 12-40 (EQDKVNCSFYYKIGACRHGERCSRKHVKP). An RRM domain is found at 44-141 (QTILCPNMYK…RPVYAELSPV (98 aa)). The C3H1-type 2 zinc finger occupies 143-170 (DFREACCRQHETSECQRGGLCNFMHAKK). The interval 194-216 (EMKKEPNSDSTNRWVSVTAERKN) is disordered.

As to quaternary structure, forms a heterodimer with the U2AF large subunit. Can also form a homodimer. U2AF large subunit (U2AF59), U2AF small subunit (U2AF23) and SF1 (bpb1) interact to form a complex required for complex A formation. Interacts with cwf13.

It localises to the nucleus. Necessary for the splicing of pre-mRNA. The SF1-U2AF59-U2AF23 complex has a role in the recognition of the branch site (5'-UACUAAC-3'), the pyrimidine tract and the 3'-splice site at the 3'-end of introns. This Schizosaccharomyces pombe (strain 972 / ATCC 24843) (Fission yeast) protein is Splicing factor U2AF 23 kDa subunit.